A 601-amino-acid chain; its full sequence is 66 kDa stress protein (601 aa).

WD repeat units follow at residues 56–95, 100–143, 145–184, 187–226, 233–272, 318–357, 435–478, 483–522, 526–565, and 569–600; these read EHAQ…HPLK, VLSG…GEIT, HSKA…FKHA, EHTR…KVGA, AHAL…LTTF, GHNK…AVPI, ASTT…LSEQ, GHRG…IKVE, YHNA…KHIA, and AHRG…WTIK.

The protein belongs to the WD repeat AIP1 family.

Functionally, associated with the process of cyst formation. This chain is 66 kDa stress protein, found in Physarum polycephalum (Slime mold).